Here is a 121-residue protein sequence, read N- to C-terminus: UPF0738 protein RBAM_011600 (121 aa).

This sequence belongs to the UPF0738 family.

The sequence is that of UPF0738 protein RBAM_011600 from Bacillus velezensis (strain DSM 23117 / BGSC 10A6 / LMG 26770 / FZB42) (Bacillus amyloliquefaciens subsp. plantarum).